A 269-amino-acid polypeptide reads, in one-letter code: Staphylococcal secretory antigen ssaA2 (269 aa).

A signal peptide spans 1–27 (MKKIATATIATAGFATIAIASGNQAHA). 7 repeat units span residues 83 to 85 (YNN), 88 to 90 (YNN), 91 to 93 (YNN), 97 to 99 (YNN), 103 to 105 (YNN), 106 to 108 (YSN), and 115 to 117 (YNN). The interval 83 to 115 (YNNYSYNNYNNGYSYNNYSRYNNYSNNNQSYNY) is 7 X 3 AA repeats of Y-[NS]-N. Residues 148–269 (MAPSSNGRSI…SQAAGYNFIH (122 aa)) form the Peptidase C51 domain.

Its subcellular location is the secreted. Its function is as follows. Not known; immunogenic protein. The chain is Staphylococcal secretory antigen ssaA2 (ssaA2) from Staphylococcus aureus (strain MRSA252).